Here is a 173-residue protein sequence, read N- to C-terminus: Photosystem I assembly protein Ycf3 (173 aa).

3 TPR repeats span residues 35–68 (AFVY…EEDP), 72–105 (SYIL…NPRM), and 120–153 (GEKA…APNN).

Belongs to the Ycf3 family.

The protein resides in the cellular thylakoid membrane. Functionally, essential for the assembly of the photosystem I (PSI) complex. May act as a chaperone-like factor to guide the assembly of the PSI subunits. This is Photosystem I assembly protein Ycf3 from Rippkaea orientalis (strain PCC 8801 / RF-1) (Cyanothece sp. (strain PCC 8801)).